The sequence spans 405 residues: 8-amino-7-oxononanoate synthase (405 aa).

Arg-23 provides a ligand contact to substrate. A pyridoxal 5'-phosphate-binding site is contributed by 114 to 115 (GY). Position 139 (His-139) interacts with substrate. Positions 185, 213, and 245 each coordinate pyridoxal 5'-phosphate. Lys-248 is subject to N6-(pyridoxal phosphate)lysine. Thr-366 contacts substrate.

Belongs to the class-II pyridoxal-phosphate-dependent aminotransferase family. BioF subfamily. In terms of assembly, homodimer. The cofactor is pyridoxal 5'-phosphate.

The catalysed reaction is 6-carboxyhexanoyl-[ACP] + L-alanine + H(+) = (8S)-8-amino-7-oxononanoate + holo-[ACP] + CO2. It functions in the pathway cofactor biosynthesis; biotin biosynthesis. Its function is as follows. Catalyzes the decarboxylative condensation of pimeloyl-[acyl-carrier protein] and L-alanine to produce 8-amino-7-oxononanoate (AON), [acyl-carrier protein], and carbon dioxide. This Delftia acidovorans (strain DSM 14801 / SPH-1) protein is 8-amino-7-oxononanoate synthase.